We begin with the raw amino-acid sequence, 204 residues long: Cell wall protein RHD3 (204 aa).

The N-terminal stretch at methionine 1–alanine 15 is a signal peptide. Glycine 182 carries GPI-anchor amidated glycine lipidation. Positions alanine 183–methionine 204 are cleaved as a propeptide — removed in mature form.

Belongs to the SRP1/TIP1 family. Post-translationally, the GPI-anchor is attached to the protein in the endoplasmic reticulum and serves to target the protein to the cell surface. There, the glucosamine-inositol phospholipid moiety is cleaved off and the GPI-modified mannoprotein is covalently attached via its lipidless GPI glycan remnant to the 1,6-beta-glucan of the outer cell wall layer. O-glycosylated by PMT1.

It localises to the secreted. It is found in the cell wall. The protein localises to the membrane. Functionally, component of the cell wall involved in virulence. Does not seem to have a major role in maintaining cell wall integrity but plays a role in the relationship between C.albicans and the host. The chain is Cell wall protein RHD3 (RHD3) from Candida albicans (strain SC5314 / ATCC MYA-2876) (Yeast).